The primary structure comprises 615 residues: Afadin- and alpha-actinin-binding protein (615 aa).

Coiled-coil stretches lie at residues 126-227 and 266-293; these read KLGS…IAMD and RQKQ…SLLS. A phosphoserine mark is found at serine 290, serine 293, serine 313, and serine 319. The tract at residues 293–316 is disordered; the sequence is SPQKKKPRERAEDGTGTVAISDIE. The stretch at 375–461 forms a coiled coil; it reads ISRQDHEQET…RSFTEAAIRL (87 aa). Serine 537, serine 541, and serine 543 each carry phosphoserine. Residues 567–615 form a disordered region; sequence PEESKPSEVARESTDQKWSVQSRPSSREGCYSGCSSAFRSAHGDRDDLP. A compositionally biased stretch (basic and acidic residues) spans 568 to 581; sequence EESKPSEVARESTD.

The protein belongs to the ADIP family. In terms of assembly, interacts with SSX2 and SSX3. Does not interact with SSX1 and SSX4. Interacts with afadin and alpha-actinin. Interacts with VAV2. Interacts with PCM1. Interacts with WRAP73. In terms of tissue distribution, widely expressed.

Its subcellular location is the cell junction. It localises to the adherens junction. The protein resides in the nucleus. It is found in the cytoplasm. The protein localises to the cytoskeleton. Its subcellular location is the microtubule organizing center. It localises to the centrosome. The protein resides in the centriolar satellite. It is found in the cilium basal body. Its function is as follows. Belongs to an adhesion system, which plays a role in the organization of homotypic, interneuronal and heterotypic cell-cell adherens junctions (AJs). May connect the nectin-afadin and E-cadherin-catenin system through alpha-actinin and may be involved in organization of the actin cytoskeleton at AJs through afadin and alpha-actinin. Acts as a centrosome maturation factor, probably by maintaining the integrity of the pericentriolar material and proper microtubule nucleation at mitotic spindle poles. The function seems to implicate at least in part WRAP73; the SSX2IP:WRAP73 complex is proposed to act as regulator of spindle anchoring at the mitotic centrosome. Involved in cell movement: localizes at the leading edge of moving cells in response to PDGF and is required for the formation of the leading edge and the promotion of cell movement, possibly via activation of Rac signaling. Involved in ciliogenesis. It is required for targeted recruitment of the BBSome, CEP290, RAB8, and SSTR3 to the cilia. The polypeptide is Afadin- and alpha-actinin-binding protein (Ssx2ip) (Mus musculus (Mouse)).